The following is a 495-amino-acid chain: UDP-N-acetylmuramoyl-L-alanyl-D-glutamate--2,6-diaminopimelate ligase (495 aa).

Residues leucine 27, serine 29, and 44-46 (HQA) each bind UDP-N-acetyl-alpha-D-muramoyl-L-alanyl-D-glutamate. 116 to 122 (GTNGKTT) contacts ATP. UDP-N-acetyl-alpha-D-muramoyl-L-alanyl-D-glutamate contacts are provided by residues asparagine 157, 158 to 159 (TT), serine 185, glutamine 191, and arginine 193. The residue at position 225 (lysine 225) is an N6-carboxylysine. Residues arginine 390, 414-417 (DNPR), glycine 465, and glutamate 469 contribute to the meso-2,6-diaminopimelate site. The Meso-diaminopimelate recognition motif signature appears at 414 to 417 (DNPR).

It belongs to the MurCDEF family. MurE subfamily. The cofactor is Mg(2+). In terms of processing, carboxylation is probably crucial for Mg(2+) binding and, consequently, for the gamma-phosphate positioning of ATP.

The protein resides in the cytoplasm. It catalyses the reaction UDP-N-acetyl-alpha-D-muramoyl-L-alanyl-D-glutamate + meso-2,6-diaminopimelate + ATP = UDP-N-acetyl-alpha-D-muramoyl-L-alanyl-gamma-D-glutamyl-meso-2,6-diaminopimelate + ADP + phosphate + H(+). Its pathway is cell wall biogenesis; peptidoglycan biosynthesis. Catalyzes the addition of meso-diaminopimelic acid to the nucleotide precursor UDP-N-acetylmuramoyl-L-alanyl-D-glutamate (UMAG) in the biosynthesis of bacterial cell-wall peptidoglycan. In Escherichia coli O6:H1 (strain CFT073 / ATCC 700928 / UPEC), this protein is UDP-N-acetylmuramoyl-L-alanyl-D-glutamate--2,6-diaminopimelate ligase.